The following is a 270-amino-acid chain: Diaminopimelate epimerase (270 aa).

N15, Q49, and N66 together coordinate substrate. C75 functions as the Proton donor in the catalytic mechanism. Residues 76 to 77 (GN), N155, N187, and 204 to 205 (ER) contribute to the substrate site. C213 acts as the Proton acceptor in catalysis. 214–215 (GS) lines the substrate pocket.

Belongs to the diaminopimelate epimerase family. Homodimer.

It localises to the cytoplasm. The catalysed reaction is (2S,6S)-2,6-diaminopimelate = meso-2,6-diaminopimelate. It functions in the pathway amino-acid biosynthesis; L-lysine biosynthesis via DAP pathway; DL-2,6-diaminopimelate from LL-2,6-diaminopimelate: step 1/1. Functionally, catalyzes the stereoinversion of LL-2,6-diaminopimelate (L,L-DAP) to meso-diaminopimelate (meso-DAP), a precursor of L-lysine and an essential component of the bacterial peptidoglycan. The polypeptide is Diaminopimelate epimerase (Rickettsia typhi (strain ATCC VR-144 / Wilmington)).